We begin with the raw amino-acid sequence, 145 residues long: Cuticle protein 5 (145 aa).

In Blaberus craniifer (Death's head cockroach), this protein is Cuticle protein 5.